The sequence spans 297 residues: Coiled-coil domain-containing protein 196 (297 aa).

A coiled-coil region spans residues 83–117 (ESSVMELLKEAEEMKQNLERKNKMLRKEMEMLWNK). The interval 122–161 (EELSDQQKAPQTKNKADLQDGKAPKSPSSPRKTESELEKS) is disordered. 2 stretches are compositionally biased toward basic and acidic residues: residues 135–144 (NKADLQDGKA) and 152–161 (RKTESELEKS).

The chain is Coiled-coil domain-containing protein 196 from Homo sapiens (Human).